Consider the following 400-residue polypeptide: Large envelope protein (400 aa).

Position 1 is an N-acetylmethionine (Met1). Disordered stretches follow at residues 1-20 and 89-115; these read MGGWSSKPRKGMGTNLSVPN and STIPPPASTNRQSGRQPTPISPPLRDS. A lipid anchor (N-myristoyl glycine; by host) is attached at Gly2. Positions 2 to 119 are pre-S1; that stretch reads GGWSSKPRKG…PPLRDSHPQA (118 aa). The interval 2 to 174 is pre-S; it reads GGWSSKPRKG…SARTGDPVTN (173 aa). Residues 2-181 are Virion surface; in external conformation-facing; it reads GGWSSKPRKG…VTNMENITSG (180 aa). The Intravirion; in internal conformation portion of the chain corresponds to 2–253; the sequence is GGWSSKPRKG…PGYRWMCLRR (252 aa). Residue Trp4 is glycosylated (N-linked (GlcNAc...) asparagine). A compositionally biased stretch (polar residues) spans 89 to 106; the sequence is STIPPPASTNRQSGRQPT. The interval 120 to 174 is pre-S2; that stretch reads MQWNSTAFHQTLQDPRVRGLYLPAGGSSSGTVNPAPNIASHISSISARTGDPVTN. The chain crosses the membrane as a helical span at residues 182–202; that stretch reads FLGPLLVLQAGFFLLTRILTI. Residues 203 to 253 are Intravirion; in external conformation-facing; it reads PQSLDSWWTSLNFLGGSPVCLGQNSQSPTSNHSPTSCPPICPGYRWMCLRR. The chain crosses the membrane as a helical span at residues 254–274; that stretch reads FIIFLFILLLCLIFLLVLLDY. Residues 275-348 are Virion surface-facing; sequence QGMLPVCPLI…WASVRFSWLS (74 aa). N-linked (GlcNAc...) asparagine; by host; partial glycosylation occurs at Asn320. A helical membrane pass occupies residues 349–369; sequence LLVPFVQWFVGLSPTVWLSAI. At 370–375 the chain is on the intravirion side; it reads WMMWYW. The helical transmembrane segment at 376 to 398 threads the bilayer; it reads GPSLYSIVSPFIPLLPIFFCLWV. Topologically, residues 399–400 are virion surface; the sequence is YI.

It belongs to the orthohepadnavirus major surface antigen family. In terms of assembly, in its internal form (Li-HBsAg), interacts with the capsid protein and with the isoform S. Interacts with host chaperone CANX. Associates with host chaperone CANX through its pre-S2 N glycan; this association may be essential for isoform M proper secretion. As to quaternary structure, interacts with isoform L. Interacts with the antigens of satellite virus HDV (HDVAgs); this interaction is required for encapsidation of HDV genomic RNA. Post-translationally, isoform M is N-terminally acetylated by host at a ratio of 90%, and N-glycosylated by host at the pre-S2 region. In terms of processing, myristoylated.

It localises to the virion membrane. Its function is as follows. The large envelope protein exists in two topological conformations, one which is termed 'external' or Le-HBsAg and the other 'internal' or Li-HBsAg. In its external conformation the protein attaches the virus to cell receptors and thereby initiating infection. This interaction determines the species specificity and liver tropism. This attachment induces virion internalization predominantly through caveolin-mediated endocytosis. The large envelope protein also assures fusion between virion membrane and endosomal membrane. In its internal conformation the protein plays a role in virion morphogenesis and mediates the contact with the nucleocapsid like a matrix protein. Functionally, the middle envelope protein plays an important role in the budding of the virion. It is involved in the induction of budding in a nucleocapsid independent way. In this process the majority of envelope proteins bud to form subviral lipoprotein particles of 22 nm of diameter that do not contain a nucleocapsid. The protein is Large envelope protein of Hepatitis B virus genotype A2 subtype adw2 (strain Rutter 1979) (HBV-A).